A 200-amino-acid chain; its full sequence is Recombination protein RecR (200 aa).

A C4-type zinc finger spans residues 58 to 75 (CPCCFCLKNFPESQCEFC). Residues 82–177 (STLCIVASPK…SISRLALGLP (96 aa)) form the Toprim domain.

This sequence belongs to the RecR family.

Functionally, may play a role in DNA repair. It seems to be involved in an RecBC-independent recombinational process of DNA repair. It may act with RecF and RecO. The protein is Recombination protein RecR of Chlamydia felis (strain Fe/C-56) (Chlamydophila felis).